The primary structure comprises 239 residues: Pyridoxal 5'-phosphate synthase subunit PdxS (239 aa).

Asp-21 is a D-ribose 5-phosphate binding site. Lys-78 (schiff-base intermediate with D-ribose 5-phosphate) is an active-site residue. Gly-150 provides a ligand contact to D-ribose 5-phosphate. Arg-162 contacts D-glyceraldehyde 3-phosphate. D-ribose 5-phosphate contacts are provided by residues Gly-211 and 232-233; that span reads GS.

It belongs to the PdxS/SNZ family. As to quaternary structure, in the presence of PdxT, forms a dodecamer of heterodimers.

The enzyme catalyses aldehydo-D-ribose 5-phosphate + D-glyceraldehyde 3-phosphate + L-glutamine = pyridoxal 5'-phosphate + L-glutamate + phosphate + 3 H2O + H(+). The protein operates within cofactor biosynthesis; pyridoxal 5'-phosphate biosynthesis. In terms of biological role, catalyzes the formation of pyridoxal 5'-phosphate from ribose 5-phosphate (RBP), glyceraldehyde 3-phosphate (G3P) and ammonia. The ammonia is provided by the PdxT subunit. Can also use ribulose 5-phosphate and dihydroxyacetone phosphate as substrates, resulting from enzyme-catalyzed isomerization of RBP and G3P, respectively. The sequence is that of Pyridoxal 5'-phosphate synthase subunit PdxS from Francisella tularensis.